We begin with the raw amino-acid sequence, 393 residues long: NAD(P)H-quinone oxidoreductase subunit H, chloroplastic (393 aa).

It belongs to the complex I 49 kDa subunit family. NDH is composed of at least 16 different subunits, 5 of which are encoded in the nucleus.

It localises to the plastid. The protein resides in the chloroplast thylakoid membrane. The catalysed reaction is a plastoquinone + NADH + (n+1) H(+)(in) = a plastoquinol + NAD(+) + n H(+)(out). It carries out the reaction a plastoquinone + NADPH + (n+1) H(+)(in) = a plastoquinol + NADP(+) + n H(+)(out). In terms of biological role, NDH shuttles electrons from NAD(P)H:plastoquinone, via FMN and iron-sulfur (Fe-S) centers, to quinones in the photosynthetic chain and possibly in a chloroplast respiratory chain. The immediate electron acceptor for the enzyme in this species is believed to be plastoquinone. Couples the redox reaction to proton translocation, and thus conserves the redox energy in a proton gradient. The sequence is that of NAD(P)H-quinone oxidoreductase subunit H, chloroplastic from Chlorokybus atmophyticus (Soil alga).